The chain runs to 195 residues: Imidazoleglycerol-phosphate dehydratase (195 aa).

The protein belongs to the imidazoleglycerol-phosphate dehydratase family.

The protein localises to the cytoplasm. It catalyses the reaction D-erythro-1-(imidazol-4-yl)glycerol 3-phosphate = 3-(imidazol-4-yl)-2-oxopropyl phosphate + H2O. It participates in amino-acid biosynthesis; L-histidine biosynthesis; L-histidine from 5-phospho-alpha-D-ribose 1-diphosphate: step 6/9. This Methylorubrum populi (strain ATCC BAA-705 / NCIMB 13946 / BJ001) (Methylobacterium populi) protein is Imidazoleglycerol-phosphate dehydratase.